We begin with the raw amino-acid sequence, 359 residues long: Hsp70-binding protein 1 (359 aa).

Residues Met1–Arg71 are disordered. The segment covering Ser23–Gly37 has biased composition (gly residues). 4 ARM repeats span residues Glu132–Gln174, Ala177–Arg217, Glu220–Val259, and Pro262–Thr301. Ser351 and Ser356 each carry phosphoserine.

In terms of assembly, interacts with the ATP-binding domain of HSPA1A. Detected in a ternary complex containing STUB1, HSPA1A and HSPBP1. Interacts with PGLYRP1; this interaction blocks the cytotoxic activity of the PGLYRP1-HSPA1A complex. As to expression, ubiquitous.

Its function is as follows. Inhibits HSPA1A chaperone activity by changing the conformation of the ATP-binding domain of HSPA1A and interfering with ATP binding. Interferes with ubiquitination mediated by STUB1 and inhibits chaperone-assisted degradation of immature CFTR. The protein is Hsp70-binding protein 1 of Homo sapiens (Human).